A 102-amino-acid chain; its full sequence is Plastocyanin (102 aa).

Residues 1-102 (AKVEVGDEVG…ANMKGTLTVK (102 aa)) form the Plastocyanin-like domain. Residues H37, C87, H90, and M95 each contribute to the Cu cation site.

It belongs to the plastocyanin family. It depends on Cu(2+) as a cofactor.

The protein resides in the plastid. It localises to the chloroplast thylakoid membrane. Its function is as follows. Participates in electron transfer between P700 and the cytochrome b6-f complex in photosystem I. This Dryopteris crassirhizoma (Thick stemmed wood fern) protein is Plastocyanin (PETE).